The following is a 28-amino-acid chain: Potassium channel toxin kappa-KTx 2.9 (28 aa).

Cystine bridges form between Cys4–Cys22 and Cys8–Cys18.

It belongs to the short scorpion toxin superfamily. Potassium channel inhibitor family. Gamma-KTx 2 subfamily. Post-translationally, contains 2 disulfide bonds. Expressed by the venom gland.

It localises to the secreted. Reversibly blocks voltage-gated potassium channels Kv1.2/KCNA2 and Kv1.3/KCNA3. This is Potassium channel toxin kappa-KTx 2.9 from Pandinus imperator (Emperor scorpion).